We begin with the raw amino-acid sequence, 258 residues long: Hydroxyacylglutathione hydrolase (258 aa).

Zn(2+) contacts are provided by His52, His54, Asp56, His57, His109, Asp126, and His164.

It belongs to the metallo-beta-lactamase superfamily. Glyoxalase II family. As to quaternary structure, monomer. Zn(2+) is required as a cofactor.

It carries out the reaction an S-(2-hydroxyacyl)glutathione + H2O = a 2-hydroxy carboxylate + glutathione + H(+). It functions in the pathway secondary metabolite metabolism; methylglyoxal degradation; (R)-lactate from methylglyoxal: step 2/2. Functionally, thiolesterase that catalyzes the hydrolysis of S-D-lactoyl-glutathione to form glutathione and D-lactic acid. This Xylella fastidiosa (strain M23) protein is Hydroxyacylglutathione hydrolase.